We begin with the raw amino-acid sequence, 339 residues long: Ketol-acid reductoisomerase (NADP(+)) (339 aa).

Residues 1–182 form the KARI N-terminal Rossmann domain; that stretch reads MRVYYDRDAD…GGGRSGVIET (182 aa). Residues 24-27, Arg-48, Ser-51, Thr-53, and 83-86 each bind NADP(+); these read YGSQ and DELQ. Residue His-108 is part of the active site. Gly-134 contributes to the NADP(+) binding site. The KARI C-terminal knotted domain maps to 183-328; that stretch reads TFKEECETDL…GKLRAMMPWI (146 aa). Residues Asp-191, Glu-195, Glu-227, and Glu-231 each coordinate Mg(2+). A substrate-binding site is contributed by Ser-252.

It belongs to the ketol-acid reductoisomerase family. Mg(2+) serves as cofactor.

It catalyses the reaction (2R)-2,3-dihydroxy-3-methylbutanoate + NADP(+) = (2S)-2-acetolactate + NADPH + H(+). It carries out the reaction (2R,3R)-2,3-dihydroxy-3-methylpentanoate + NADP(+) = (S)-2-ethyl-2-hydroxy-3-oxobutanoate + NADPH + H(+). It functions in the pathway amino-acid biosynthesis; L-isoleucine biosynthesis; L-isoleucine from 2-oxobutanoate: step 2/4. Its pathway is amino-acid biosynthesis; L-valine biosynthesis; L-valine from pyruvate: step 2/4. Functionally, involved in the biosynthesis of branched-chain amino acids (BCAA). Catalyzes an alkyl-migration followed by a ketol-acid reduction of (S)-2-acetolactate (S2AL) to yield (R)-2,3-dihydroxy-isovalerate. In the isomerase reaction, S2AL is rearranged via a Mg-dependent methyl migration to produce 3-hydroxy-3-methyl-2-ketobutyrate (HMKB). In the reductase reaction, this 2-ketoacid undergoes a metal-dependent reduction by NADPH to yield (R)-2,3-dihydroxy-isovalerate. The chain is Ketol-acid reductoisomerase (NADP(+)) from Brucella suis (strain ATCC 23445 / NCTC 10510).